The sequence spans 303 residues: Deoxyhypusine hydroxylase (303 aa).

HEAT-like PBS-type repeat units lie at residues 56 to 82 and 89 to 115; these read LKHE…VLQD and VRHE…YAQD. Fe cation is bound by residues His58, His91, and Glu92. Residues 139–158 are disordered; sequence DSPDTNPYLSVDPAPPAEEK. 3 HEAT-like PBS-type repeats span residues 176–202, 207–233, and 240–266; these read HRYR…GLQI, FRHE…ALER, and VRHE…HVGD. Fe cation-binding residues include His209, His242, and Glu243.

It belongs to the deoxyhypusine hydroxylase family. Requires Fe(2+) as cofactor.

It carries out the reaction [eIF5A protein]-deoxyhypusine + AH2 + O2 = [eIF5A protein]-hypusine + A + H2O. The protein operates within protein modification; eIF5A hypusination. Catalyzes the hydroxylation of the N(6)-(4-aminobutyl)-L-lysine intermediate produced by deoxyhypusine synthase/DHPS on a critical lysine of the eukaryotic translation initiation factor 5A/eIF-5A. This is the second step of the post-translational modification of that lysine into an unusual amino acid residue named hypusine. Hypusination is unique to mature eIF-5A factor and is essential for its function. In Xenopus laevis (African clawed frog), this protein is Deoxyhypusine hydroxylase (dohh).